Consider the following 335-residue polypeptide: HTH-type transcriptional regulator RipA (335 aa).

Positions R119 to P216 constitute an HTH araC/xylS-type domain. 2 consecutive DNA-binding regions (H-T-H motif) follow at residues L136–T157 and I183–T206.

Functionally, under iron limitation, represses the acn (aconitase), catA (catechol 1,2 dioxygenase), leuCD (isopropylmalate dehydratase), narKGHJI (nitrite/nitrate transporter and nitrate reductase), sdhCAB (succinate dehydrogenase), pta (phosphotransacetylase) and katA (catalase) genes. The polypeptide is HTH-type transcriptional regulator RipA (Corynebacterium diphtheriae (strain ATCC 700971 / NCTC 13129 / Biotype gravis)).